The sequence spans 433 residues: tRNA-2-methylthio-N(6)-dimethylallyladenosine synthase (433 aa).

The 116-residue stretch at 4–119 (KKLFIQTLGC…ITQAIKTPKF (116 aa)) folds into the MTTase N-terminal domain. [4Fe-4S] cluster is bound by residues Cys-13, Cys-50, Cys-82, Cys-151, Cys-155, and Cys-158. In terms of domain architecture, Radical SAM core spans 137–370 (RNSIYKSYIN…QNRHSEILDK (234 aa)). A TRAM domain is found at 373–433 (KKQENKTFKV…KRMVLYGEIV (61 aa)).

The protein belongs to the methylthiotransferase family. MiaB subfamily. Monomer. [4Fe-4S] cluster is required as a cofactor.

The protein localises to the cytoplasm. It catalyses the reaction N(6)-dimethylallyladenosine(37) in tRNA + (sulfur carrier)-SH + AH2 + 2 S-adenosyl-L-methionine = 2-methylsulfanyl-N(6)-dimethylallyladenosine(37) in tRNA + (sulfur carrier)-H + 5'-deoxyadenosine + L-methionine + A + S-adenosyl-L-homocysteine + 2 H(+). Functionally, catalyzes the methylthiolation of N6-(dimethylallyl)adenosine (i(6)A), leading to the formation of 2-methylthio-N6-(dimethylallyl)adenosine (ms(2)i(6)A) at position 37 in tRNAs that read codons beginning with uridine. This chain is tRNA-2-methylthio-N(6)-dimethylallyladenosine synthase, found in Campylobacter jejuni subsp. jejuni serotype O:2 (strain ATCC 700819 / NCTC 11168).